Consider the following 448-residue polypeptide: GTPase Der (448 aa).

EngA-type G domains are found at residues 3 to 167 and 182 to 355; these read PVIA…EPPE and TRLA…ASAT. GTP-binding positions include 9 to 16, 56 to 60, 119 to 122, 188 to 195, 235 to 239, and 300 to 303; these read GRPNVGKS, DTGGF, NKAE, DTAGL, and NKWD. The KH-like domain occupies 356 to 440; that stretch reads RKLPTPQLTR…PMRIELRASH (85 aa).

Belongs to the TRAFAC class TrmE-Era-EngA-EngB-Septin-like GTPase superfamily. EngA (Der) GTPase family. Associates with the 50S ribosomal subunit.

Its function is as follows. GTPase that plays an essential role in the late steps of ribosome biogenesis. This is GTPase Der from Leptothrix cholodnii (strain ATCC 51168 / LMG 8142 / SP-6) (Leptothrix discophora (strain SP-6)).